The sequence spans 904 residues: Nitrate reductase [NADH] 2 (904 aa).

Composition is skewed to polar residues over residues 1–10 (MAASVENRQF) and 35–50 (PSPN…NSTI). Residues 1–65 (MAASVENRQF…SSEDDDDDDE (65 aa)) are disordered. The segment covering 56–65 (SSEDDDDDDE) has biased composition (acidic residues). Cys183 is a Mo-molybdopterin binding site. Residues 531–606 (SKMYSMSEVR…LEDFRIGELI (76 aa)) form the Cytochrome b5 heme-binding domain. The heme site is built by His566 and His589. One can recognise an FAD-binding FR-type domain in the interval 647–759 (REKIPCKLID…KGPLGHIEYQ (113 aa)). FAD contacts are provided by residues 699–702 (RAYT), 716–720 (VVKIY), Phe721, Phe728, 733–735 (QMS), and Thr786.

Belongs to the nitrate reductase family. In terms of assembly, homodimer. FAD is required as a cofactor. Heme serves as cofactor. The cofactor is Mo-molybdopterin.

It catalyses the reaction nitrite + NAD(+) + H2O = nitrate + NADH + H(+). Its activity is regulated as follows. Regulated by the nitrogen source and controlled by the circadian rhythm. Functionally, nitrate reductase is a key enzyme involved in the first step of nitrate assimilation in plants, fungi and bacteria. The sequence is that of Nitrate reductase [NADH] 2 (NIA2) from Nicotiana tabacum (Common tobacco).